A 348-amino-acid polypeptide reads, in one-letter code: uncharacterized protein (348 aa).

WD repeat units lie at residues Gly59–Ser98, Gly142–Thr182, Asp185–Thr226, Gln229–Ser267, Gly270–Thr309, and Gly312–Ala347.

This is an uncharacterized protein from Synechocystis sp. (strain ATCC 27184 / PCC 6803 / Kazusa).